The sequence spans 336 residues: Urokinase plasminogen activator surface receptor (336 aa).

An N-terminal signal peptide occupies residues 1–23 (MGHPLLLPLLLLLLHTGVPASWG). UPAR/Ly6 domains lie at 24–111 (LRCM…VTFP), 116–208 (LECI…LSLA), and 215–302 (HRCY…EDIQ). 3 disulfide bridges follow: C26–C47, C29–C35, and C40–C68. N-linked (GlcNAc...) asparagine glycosylation is present at N75. 11 cysteine pairs are disulfide-bonded: C94-C99, C118-C145, C121-C128, C138-C170, C176-C193, C194-C199, C217-C245, C220-C228, C238-C264, C270-C288, and C289-C294. N195 and N223 each carry an N-linked (GlcNAc...) asparagine glycan.

As to quaternary structure, monomer. Interacts (via the UPAR/Ly6 domains) with SRPX2. Interacts with MRC2. Interacts with FAP (seprase); the interaction occurs at the cell surface of invadopodia membrane. Interacts with SORL1 (via N-terminal ectodomain); this interaction decreases PLAUR internalization. The ternary complex composed of PLAUR-PLAU-SERPINE1 also interacts with SORL1.

The protein localises to the cell membrane. The protein resides in the cell projection. It localises to the invadopodium membrane. Its function is as follows. Acts as a receptor for urokinase plasminogen activator. Plays a role in localizing and promoting plasmin formation. Mediates the proteolysis-independent signal transduction activation effects of U-PA. It is subject to negative-feedback regulation by U-PA which cleaves it into an inactive form. The protein is Urokinase plasminogen activator surface receptor (PLAUR) of Aotus trivirgatus (Three-striped night monkey).